We begin with the raw amino-acid sequence, 338 residues long: MENLDALVSQALEAVQQSEDVNALEQLRVQYLGKKGELTALMQTLGKLSAEERPQAGALINTAKNQVQDALNARKSVLEQALLAEKLASERIDVTLPGRGQTSGGLHPVTRTLERVEQFFTHIGYSVAEGPEVEDDYHNFEALNIPGHHPARAMHDTFYFNANMLLRTHTSPVQVRTMESQQPPIRIVCPGRVYRCDSDITHSPMFHQVEGLLVDEGISFADLKGTIEEFLRVFFEKPLGVRFRPSFFPFTEPSAEVDMQCVMCSGKGCRVCKQTGWLEVMGCGMVHPNVLRMSGIDPEKYSGFAFGMGVERLAMLRYGVNDLRLFFDNDLRFLAQFR.

Residue glutamate 252 participates in Mg(2+) binding.

This sequence belongs to the class-II aminoacyl-tRNA synthetase family. Phe-tRNA synthetase alpha subunit type 1 subfamily. As to quaternary structure, tetramer of two alpha and two beta subunits. Requires Mg(2+) as cofactor.

The protein localises to the cytoplasm. It catalyses the reaction tRNA(Phe) + L-phenylalanine + ATP = L-phenylalanyl-tRNA(Phe) + AMP + diphosphate + H(+). The polypeptide is Phenylalanine--tRNA ligase alpha subunit (Ectopseudomonas mendocina (strain ymp) (Pseudomonas mendocina)).